The chain runs to 187 residues: Fibroblast growth factor 4A (187 aa).

The first 22 residues, 1–22 (MTVPSALVPILLLGTAAVMVQC), serve as a signal peptide directing secretion.

The protein belongs to the heparin-binding growth factors family.

Its subcellular location is the secreted. In terms of biological role, plays an important role in the regulation of embryonic development, cell proliferation, and cell differentiation. Good candidate for an inducing factor with possible roles both in mesoderm induction at the blastula stage and in the formation of the anteroposterior axis at the gastrula stage. This Xenopus laevis (African clawed frog) protein is Fibroblast growth factor 4A (fgf4-a).